The sequence spans 257 residues: 5'-nucleotidase SurE (257 aa).

A divalent metal cation is bound by residues D8, D9, S40, and N92.

The protein belongs to the SurE nucleotidase family. It depends on a divalent metal cation as a cofactor.

It is found in the cytoplasm. The catalysed reaction is a ribonucleoside 5'-phosphate + H2O = a ribonucleoside + phosphate. Its function is as follows. Nucleotidase that shows phosphatase activity on nucleoside 5'-monophosphates. This Rhizobium etli (strain ATCC 51251 / DSM 11541 / JCM 21823 / NBRC 15573 / CFN 42) protein is 5'-nucleotidase SurE.